Consider the following 257-residue polypeptide: MMHILVTLLLVAIHSIPTTWAVTCTGCVDLDELSFEKTVERFPYSVVKFDIAYPYGEKHEAFTAFSKSAHKATKDLLIATVGVKDYGELENKALGDRYKVDDKNFPSIFLFKGNADEYVQLPSHVDVTLDNLKAFVSANTPLYIGRDGCIKEFNEVLKNYANIPDAEQLKLIEKLQAKQEQLTDPEQQQNARAYLIYMRKIHEVGYDFLEEETKRLLRLKAGKVTEAKKEELLRKLNILEVFRVHKVTKTAPEKEEL.

An N-terminal signal peptide occupies residues 1 to 21 (MMHILVTLLLVAIHSIPTTWA). Positions 24–27 (CTGC) are CXXC motif. A Prevents secretion from ER motif is present at residues 254–257 (KEEL).

In terms of assembly, homodimer. Interacts with pip; the interaction is direct and does not require pip to be folded. As to expression, briefly expressed in the follicle cells of the ovary, at around the time when the dorsoventral axis of the egg chamber is first established.

It localises to the endoplasmic reticulum lumen. Its function is as follows. Probable chaperone protein involved in dorsoventral axis patterning in early embryos. Probably acts by folding and targeting pipe (pip) into the Golgi. In Drosophila melanogaster (Fruit fly), this protein is Protein windbeutel.